We begin with the raw amino-acid sequence, 583 residues long: Trehalase (583 aa).

An N-terminal signal peptide occupies residues 1 to 23 (MPGRTWELCLLLLLGLGLGSQEA). The N-linked (GlcNAc...) asparagine glycan is linked to asparagine 78. Residues arginine 168, 175–176 (WD), asparagine 212, and 221–223 (RSQ) contribute to the substrate site. N-linked (GlcNAc...) asparagine glycans are attached at residues asparagine 239 and asparagine 261. Residues 286 to 288 (RPE) and glycine 319 contribute to the substrate site. Aspartate 321 (proton donor/acceptor) is an active-site residue. N-linked (GlcNAc...) asparagine glycosylation occurs at asparagine 369. Glutamate 514 functions as the Proton donor/acceptor in the catalytic mechanism. Glutamate 529 provides a ligand contact to substrate. Serine 556 carries GPI-anchor amidated serine lipidation. A propeptide spans 557 to 583 (GAKLAFLEPHCLAATLLPSLLLSLLPW) (removed in mature form).

It belongs to the glycosyl hydrolase 37 family. As to quaternary structure, homodimer; disulfide-linked. Expressed in kidney, liver and small intestine. Also more weakly expressed in pancreas.

Its subcellular location is the cell membrane. The enzyme catalyses alpha,alpha-trehalose + H2O = alpha-D-glucose + beta-D-glucose. Intestinal trehalase is probably involved in the hydrolysis of ingested trehalose. This is Trehalase from Homo sapiens (Human).